We begin with the raw amino-acid sequence, 213 residues long: MSGYKNNNLVKLCIMGDGGVGKTAVTIQFISNHFVHYYDPTIEDSYRKQCVIDDQVYMLDILDTAGQDELTAMRDQWIRSCEGFVLVYSVTSRSSFDQIAFFKEQINRVLDSDDVPIMMIGNKSDLDDERQVTYQEGKDLARCFGMSFMEVSAKTRSNIEEVFNETVRCVKRKYDLHNKDKSKDGKDIKKKNSIIKKLNQKVNNTKNSICKMM.

Residue 16-23 (GDGGVGKT) participates in GTP binding. The Effector region motif lies at 38 to 46 (YDPTIEDSY). GTP is bound by residues 63–67 (DTAGQ) and 122–125 (NKSD). Cys-210 carries the post-translational modification Cysteine methyl ester. Cys-210 is lipidated: S-geranylgeranyl cysteine. Residues 211–213 (KMM) constitute a propeptide, removed in mature form.

It belongs to the small GTPase superfamily. Ras family.

It localises to the cell membrane. It carries out the reaction GTP + H2O = GDP + phosphate + H(+). Its function is as follows. Ras proteins bind GDP/GTP and possess intrinsic GTPase activity. In Dictyostelium discoideum (Social amoeba), this protein is Ras-like protein rasX (rasX).